Consider the following 307-residue polypeptide: Leucine-rich repeat-containing protein 59 (307 aa).

The Cytoplasmic segment spans residues 1-247; the sequence is MARANGRSQN…LAQRQSRLRK (247 aa). LRR repeat units lie at residues 10–31, 40–61, 63–84, 86–107, and 109–131; these read NLRD…SEVP, KATA…FCNL, HIVR…FGRL, NLQH…FAQL, and SLKW…AGDC. A coiled-coil region spans residues 156 to 222; that stretch reads EIELQRKLQL…LNSNKKAEEE (67 aa). The segment at 170–238 is disordered; it reads KKKLEAKQRV…RMATPKEKKL (69 aa). Composition is skewed to basic and acidic residues over residues 174–187 and 194–238; these read EAKQ…EREM and QQKE…EKKL. A helical transmembrane segment spans residues 248–268; that stretch reads IACILLFGLLVVLLVVVACRF. The Lumenal segment spans residues 269–307; the sequence is TDLKAINMCTSVNAIYKETLSALHSNPVLERFLQDPSSQ.

Interacts with SGO1.

The protein localises to the microsome membrane. It is found in the endoplasmic reticulum membrane. It localises to the nucleus envelope. In terms of biological role, required for nuclear import of FGF1. The protein is Leucine-rich repeat-containing protein 59 (lrrc59) of Xenopus laevis (African clawed frog).